The chain runs to 454 residues: Chromosomal replication initiator protein DnaA (454 aa).

The segment at 1-83 is domain I, interacts with DnaA modulators; sequence MTEKEHFFWN…IKVEYVFDEA (83 aa). Residues 83–113 form a domain II region; it reads ALVSETKPTLANNDFSNKREQQTPDLPTLNS. The tract at residues 114–332 is domain III, AAA+ region; sequence DLNSKYTFDN…GALKDISLVA (219 aa). 4 residues coordinate ATP: glycine 158, glycine 160, lysine 161, and threonine 162. The interval 333 to 454 is domain IV, binds dsDNA; sequence NVRQLDTITV…EIDTIKNKIK (122 aa).

This sequence belongs to the DnaA family. As to quaternary structure, oligomerizes as a right-handed, spiral filament on DNA at oriC.

It is found in the cytoplasm. Functionally, plays an essential role in the initiation and regulation of chromosomal replication. ATP-DnaA binds to the origin of replication (oriC) to initiate formation of the DNA replication initiation complex once per cell cycle. Binds the DnaA box (a 9 base pair repeat at the origin) and separates the double-stranded (ds)DNA. Forms a right-handed helical filament on oriC DNA; dsDNA binds to the exterior of the filament while single-stranded (ss)DNA is stabiized in the filament's interior. The ATP-DnaA-oriC complex binds and stabilizes one strand of the AT-rich DNA unwinding element (DUE), permitting loading of DNA polymerase. After initiation quickly degrades to an ADP-DnaA complex that is not apt for DNA replication. Binds acidic phospholipids. In Streptococcus thermophilus (strain ATCC BAA-250 / LMG 18311), this protein is Chromosomal replication initiator protein DnaA.